The primary structure comprises 337 residues: uncharacterized protein (337 aa).

2 helical membrane passes run 241–261 (FTLLGFVLFFLSAVAGIGAFI) and 273–293 (ASLIISIWFLGGLQLMGIGII).

This sequence belongs to the glycosyltransferase 2 family.

It localises to the cell membrane. This is an uncharacterized protein from Bacillus subtilis (strain 168).